The chain runs to 460 residues: Chromosomal replication initiator protein DnaA 1 (460 aa).

Positions 1–68 are domain I, interacts with DnaA modulators; the sequence is MRAWEEFLLL…KSGLVNNNNK (68 aa). A domain II region spans residues 68-102; the sequence is KPIRVHVTSVDKAAPFYKEKQMQQEKTAYFTMHYG. The tract at residues 103–321 is domain III, AAA+ region; sequence SVNPEMTFSN…HALNLLAKRV (219 aa). ATP-binding residues include G151, G153, K154, and T155. Positions 322–460 are domain IV, binds dsDNA; sequence MYKKLSHQLL…EFFPSEEMII (139 aa).

It belongs to the DnaA family. In terms of assembly, oligomerizes as a right-handed, spiral filament on DNA at oriC.

The protein resides in the cytoplasm. Plays an essential role in the initiation and regulation of chromosomal replication. ATP-DnaA binds to the origin of replication (oriC) to initiate formation of the DNA replication initiation complex once per cell cycle. Binds the DnaA box (a 9 base pair repeat at the origin) and separates the double-stranded (ds)DNA. Forms a right-handed helical filament on oriC DNA; dsDNA binds to the exterior of the filament while single-stranded (ss)DNA is stabiized in the filament's interior. The ATP-DnaA-oriC complex binds and stabilizes one strand of the AT-rich DNA unwinding element (DUE), permitting loading of DNA polymerase. After initiation quickly degrades to an ADP-DnaA complex that is not apt for DNA replication. Binds acidic phospholipids. The sequence is that of Chromosomal replication initiator protein DnaA 1 from Chlamydia pneumoniae (Chlamydophila pneumoniae).